A 414-amino-acid chain; its full sequence is 2,3-bisphosphoglycerate-independent phosphoglycerate mutase (414 aa).

Belongs to the BPG-independent phosphoglycerate mutase family. A-PGAM subfamily.

The enzyme catalyses (2R)-2-phosphoglycerate = (2R)-3-phosphoglycerate. It functions in the pathway carbohydrate degradation; glycolysis; pyruvate from D-glyceraldehyde 3-phosphate: step 3/5. Functionally, catalyzes the interconversion of 2-phosphoglycerate and 3-phosphoglycerate. This is 2,3-bisphosphoglycerate-independent phosphoglycerate mutase from Saccharolobus solfataricus (strain ATCC 35092 / DSM 1617 / JCM 11322 / P2) (Sulfolobus solfataricus).